The sequence spans 320 residues: o-succinylbenzoate synthase (320 aa).

Lys133 (proton donor) is an active-site residue. The Mg(2+) site is built by Asp161, Glu190, and Asp213. The Proton acceptor role is filled by Lys235.

This sequence belongs to the mandelate racemase/muconate lactonizing enzyme family. MenC type 1 subfamily. The cofactor is a divalent metal cation.

It catalyses the reaction (1R,6R)-6-hydroxy-2-succinyl-cyclohexa-2,4-diene-1-carboxylate = 2-succinylbenzoate + H2O. It participates in quinol/quinone metabolism; 1,4-dihydroxy-2-naphthoate biosynthesis; 1,4-dihydroxy-2-naphthoate from chorismate: step 4/7. It functions in the pathway quinol/quinone metabolism; menaquinone biosynthesis. Converts 2-succinyl-6-hydroxy-2,4-cyclohexadiene-1-carboxylate (SHCHC) to 2-succinylbenzoate (OSB). In Shigella boydii serotype 18 (strain CDC 3083-94 / BS512), this protein is o-succinylbenzoate synthase.